The sequence spans 1320 residues: Transcriptional activator MN1 (1320 aa).

Met1 is subject to N-acetylmethionine. Disordered regions lie at residues 1 to 26 (MFGL…FNET), 92 to 121 (FGGQ…FGGP), 147 to 219 (PPFA…SLEP), 231 to 411 (LEYN…EYPI), 423 to 442 (SEPV…NQRL), 474 to 615 (NGSM…AGRL), 629 to 819 (SAWF…KDNL), 840 to 1150 (GAPN…PDEI), and 1247 to 1273 (PWEK…SASQ). Over residues 98 to 113 (HHGHPGSHHPHQHHPH) the composition is skewed to basic residues. Composition is skewed to low complexity over residues 202 to 214 (SFHG…GSDS) and 291 to 309 (QPPQ…QQQQ). The span at 338-366 (MQPPQQAPPPPQQQPPQQPPQQQPPPPPG) shows a compositional bias: pro residues. Over residues 498–514 (FTPPVPDSFPSGPPLQH) the composition is skewed to pro residues. Composition is skewed to low complexity over residues 523-550 (QQQQ…QQQQ) and 564-578 (RNQQ…LAQL). Composition is skewed to gly residues over residues 582–596 (GDVG…GPVG) and 701–710 (QFGGSLGGLG). Low complexity predominate over residues 759–768 (SGPGVNSPPS). Over residues 769 to 784 (AGGGGGSSGGGGGGGA) the composition is skewed to gly residues. Low complexity-rich tracts occupy residues 798–809 (SASKLGALSLGS) and 895–905 (GTSSSGSKASG). Residues 914 to 930 (DGTSLSPNYTLESTSGN) show a composition bias toward polar residues. 2 positions are modified to phosphoserine: Ser950 and Ser954. The segment covering 973-984 (GVSPGQQQASGA) has biased composition (low complexity). Ser1007 is modified (phosphoserine). Over residues 1048 to 1066 (EVSTSYANEDEVSSSSDNP) the composition is skewed to polar residues. A Phosphoserine modification is found at Ser1081. Gly residues predominate over residues 1118–1128 (YGGGGGPGHPG).

As to quaternary structure, interacts with PBX1, PKNOX1, ZBTB24, E2F7, RING1. In terms of tissue distribution, widely expressed in fetal and adult tissues. Highest expression is observed in fetal brain and skeletal muscle, and adult skeletal muscle.

Its subcellular location is the nucleus. In terms of biological role, transcriptional activator which specifically regulates expression of TBX22 in the posterior region of the developing palate. Required during later stages of palate development for growth and medial fusion of the palatal shelves. Promotes maturation and normal function of calvarial osteoblasts, including expression of the osteoclastogenic cytokine TNFSF11/RANKL. Necessary for normal development of the membranous bones of the skull. May play a role in tumor suppression. The polypeptide is Transcriptional activator MN1 (MN1) (Homo sapiens (Human)).